We begin with the raw amino-acid sequence, 212 residues long: uncharacterized protein (212 aa).

Residues 1–88 (MAEEQKIALE…PAPAKPASAS (88 aa)) are disordered. At S13 the chain carries Phosphoserine. The segment covering 23–41 (ADTPAPAPAEIPAPAPAPT) has biased composition (pro residues). A compositionally biased stretch (basic and acidic residues) spans 45 to 54 (VTKDVAEEKI).

It belongs to the remorin family.

The protein localises to the cell membrane. This is an uncharacterized protein from Arabidopsis thaliana (Mouse-ear cress).